Reading from the N-terminus, the 1401-residue chain is DNA-directed RNA polymerase subunit beta (1401 aa).

Belongs to the RNA polymerase beta chain family. The RNAP catalytic core consists of 2 alpha, 1 beta, 1 beta' and 1 omega subunit. When a sigma factor is associated with the core the holoenzyme is formed, which can initiate transcription.

It catalyses the reaction RNA(n) + a ribonucleoside 5'-triphosphate = RNA(n+1) + diphosphate. Its function is as follows. DNA-dependent RNA polymerase catalyzes the transcription of DNA into RNA using the four ribonucleoside triphosphates as substrates. The chain is DNA-directed RNA polymerase subunit beta from Zymomonas mobilis subsp. mobilis (strain ATCC 31821 / ZM4 / CP4).